A 311-amino-acid polypeptide reads, in one-letter code: Dihydroorotate dehydrogenase B (NAD(+)), catalytic subunit (311 aa).

FMN-binding positions include serine 24 and 48 to 49; that span reads KA. Residues lysine 48 and 72 to 76 each bind substrate; that span reads NAIGL. Residues asparagine 104 and asparagine 132 each contribute to the FMN site. Asparagine 132 is a substrate binding site. Cysteine 135 (nucleophile) is an active-site residue. Residues lysine 170 and isoleucine 196 each contribute to the FMN site. A substrate-binding site is contributed by 197-198; the sequence is NT. Residues glycine 222, 248–249, and 270–271 each bind FMN; these read GG and GT.

This sequence belongs to the dihydroorotate dehydrogenase family. Type 1 subfamily. Heterotetramer of 2 PyrK and 2 PyrD type B subunits. Requires FMN as cofactor.

The protein localises to the cytoplasm. The enzyme catalyses (S)-dihydroorotate + NAD(+) = orotate + NADH + H(+). Its pathway is pyrimidine metabolism; UMP biosynthesis via de novo pathway; orotate from (S)-dihydroorotate (NAD(+) route): step 1/1. In terms of biological role, catalyzes the conversion of dihydroorotate to orotate with NAD(+) as electron acceptor. In Lactococcus lactis subsp. lactis (strain IL1403) (Streptococcus lactis), this protein is Dihydroorotate dehydrogenase B (NAD(+)), catalytic subunit (pyrDB).